The primary structure comprises 1402 residues: Phospholipid-transporting ATPase dnf2 (1402 aa).

The next 4 helical transmembrane spans lie at 109–129, 135–155, 457–477, and 501–521; these read FQNV…ISIF, PGLA…KDAI, LNFI…GIAW, and VVTF…SLYI. Aspartate 569 functions as the 4-aspartylphosphate intermediate in the catalytic mechanism. ATP is bound by residues aspartate 569, lysine 570, threonine 571, glutamate 700, phenylalanine 741, serine 743, lysine 746, lysine 764, arginine 799, threonine 800, threonine 879, glycine 880, aspartate 881, arginine 986, and lysine 992. Aspartate 569 serves as a coordination point for Mg(2+). Threonine 571 provides a ligand contact to Mg(2+). Position 1012 (aspartate 1012) interacts with Mg(2+). ATP-binding residues include asparagine 1015 and aspartate 1016. Aspartate 1016 is a binding site for Mg(2+). 6 consecutive transmembrane segments (helical) span residues 1066–1086, 1101–1121, 1151–1171, 1193–1213, 1218–1238, and 1260–1280; these read VAEM…TLFW, YTYV…VMGV, IFIG…FFSF, LGVY…ILNQ, VFSI…TGVY, and FWAV…LFMT. Lysine 1275 lines the a 1,2-diacyl-sn-glycero-3-phospho-L-serine pocket.

Belongs to the cation transport ATPase (P-type) (TC 3.A.3) family. Type IV subfamily. Mg(2+) is required as a cofactor.

The protein localises to the cell membrane. Its subcellular location is the endoplasmic reticulum membrane. It catalyses the reaction ATP + H2O + phospholipidSide 1 = ADP + phosphate + phospholipidSide 2.. It carries out the reaction a 1,2-diacyl-sn-glycero-3-phosphoethanolamine(out) + ATP + H2O = a 1,2-diacyl-sn-glycero-3-phosphoethanolamine(in) + ADP + phosphate + H(+). The catalysed reaction is a 1,2-diacyl-sn-glycero-3-phosphocholine(out) + ATP + H2O = a 1,2-diacyl-sn-glycero-3-phosphocholine(in) + ADP + phosphate + H(+). The enzyme catalyses a beta-D-glucosyl-(1&lt;-&gt;1')-N-acylsphing-4-enine(out) + ATP + H2O = a beta-D-glucosyl-(1&lt;-&gt;1')-N-acylsphing-4-enine(in) + ADP + phosphate + H(+). It catalyses the reaction a 1,2-diacyl-sn-glycero-3-phospho-L-serine(out) + ATP + H2O = a 1,2-diacyl-sn-glycero-3-phospho-L-serine(in) + ADP + phosphate + H(+). In terms of biological role, catalytic component of a P4-ATPase flippase complex which catalyzes the hydrolysis of ATP coupled to the transport of glucosylceramide, phosphatidylcholine, phosphatidylethanolamine, and small amounts of phosphatidylserine from the lumenal to the cytosolic leaflet of the cell membrane and ensures the maintenance of asymmetric distribution of phospholipids. This is Phospholipid-transporting ATPase dnf2 from Schizosaccharomyces pombe (strain 972 / ATCC 24843) (Fission yeast).